The chain runs to 552 residues: Elongator complex protein 3 (552 aa).

Residues 84–374 (RTASGIAVVA…YRVQRDIPMP (291 aa)) form the Radical SAM core domain. [4Fe-4S] cluster contacts are provided by C101, C111, and C114. Residues K166, 476 to 479 (ELHV), 499 to 501 (FGM), and Y532 contribute to the acetyl-CoA site. Positions 398–552 (TTCRDVRTRE…YMSKSIEENN (155 aa)) constitute an N-acetyltransferase domain.

Belongs to the ELP3 family. Component of the elongator complex composed of Elp1, Elp2, Elp3, Elp4, Elp5 and Elp6. The elongator complex associates with and stabilizes microtubules; efficient interaction requires the full complex. [4Fe-4S] cluster serves as cofactor.

Its subcellular location is the cytoplasm. The protein localises to the nucleus. The protein resides in the cytoskeleton. It is found in the spindle. The catalysed reaction is uridine(34) in tRNA + acetyl-CoA + S-adenosyl-L-methionine + H2O = 5-(carboxymethyl)uridine(34) in tRNA + 5'-deoxyadenosine + L-methionine + CoA + 2 H(+). Its pathway is tRNA modification; 5-methoxycarbonylmethyl-2-thiouridine-tRNA biosynthesis. Its function is as follows. Catalytic tRNA acetyltransferase subunit of the elongator complex, which is required for multiple tRNA modifications, including mcm5U (5-methoxycarbonylmethyl uridine), mcm5s2U (5-methoxycarbonylmethyl-2-thiouridine), and ncm5U (5-carbamoylmethyl uridine). In the elongator complex, acts as a tRNA uridine(34) acetyltransferase by mediating formation of carboxymethyluridine in the wobble base at position 34 in tRNAs. Binding by the elongator complex stabilizes microtubules and promotes their growth. This induces central spindle asymmetry, promoting polarized signaling endosome trafficking during asymmetric cell division and cell fate assignation of sensory organ precursor cells. Plays a role in the control of synaptic bouton expansion. Required for larval development. Involved in protein synthesis-dependent long-term memory formation, probably as part of the elongator complex. The polypeptide is Elongator complex protein 3 (Drosophila melanogaster (Fruit fly)).